The chain runs to 2258 residues: Genome polyprotein 1 (2258 aa).

The region spanning 439 to 597 (SMAQEAKQWS…AVRRYEIKTV (159 aa)) is the Helicase ATP-binding domain. An ATP-binding site is contributed by 487 to 494 (RAATVNVT). Residues 612–778 (DKENSLYVLQ…GVQFYINEHF (167 aa)) form the Helicase C-terminal domain. Tyrosine 1141 bears the O-(5'-phospho-RNA)-tyrosine mark. In terms of domain architecture, Peptidase C4 spans 1257–1476 (ATLEGMTMKP…TKPRNMQSAP (220 aa)). Catalysis depends on for nuclear inclusion protein A activity residues histidine 1302, aspartate 1338, and cysteine 1405. The 125-residue stretch at 1745–1869 (WTHGSGDGSR…AMSPSFMVKF (125 aa)) folds into the RdRp catalytic domain. 2 disordered regions span residues 2027–2047 (NMAA…RGTS) and 2233–2258 (TSEQ…ALLR). Basic and acidic residues predominate over residues 2242–2258 (TETRRRNDYDGHEALLR).

The protein belongs to the bymoviruses polyprotein 1 family. Post-translationally, VPg is uridylylated by the polymerase and is covalently attached to the 5'-end of the genomic RNA. This uridylylated form acts as a nucleotide-peptide primer for the polymerase. In terms of processing, the viral RNA1 of bymoviruses is expressed as a single polyprotein which undergoes post-translational proteolytic processing by the main proteinase NIa-pro resulting in the production of at least eight individual proteins.

It is found in the host cytoplasmic vesicle. It localises to the virion. The catalysed reaction is RNA(n) + a ribonucleoside 5'-triphosphate = RNA(n+1) + diphosphate. It carries out the reaction Hydrolyzes glutaminyl bonds, and activity is further restricted by preferences for the amino acids in P6 - P1' that vary with the species of potyvirus, e.g. Glu-Xaa-Xaa-Tyr-Xaa-Gln-|-(Ser or Gly) for the enzyme from tobacco etch virus. The natural substrate is the viral polyprotein, but other proteins and oligopeptides containing the appropriate consensus sequence are also cleaved.. In terms of biological role, indispensable for virus replication. Mediates the cap-independent, EIF4E-dependent translation of viral genomic RNAs. Binds to the cap-binding site of host EIF4E and thus interferes with the host EIF4E-dependent mRNA export and translation. VPg-RNA directly binds EIF4E and is a template for transcription. Also forms trimeric complexes with EIF4E-EIF4G, which are templates for translation. Functionally, has RNA-binding and proteolytic activities. Its function is as follows. An RNA-dependent RNA polymerase that plays an essential role in the virus replication. The protein is Genome polyprotein 1 of Barley mild mosaic virus (strain Na1) (BaMMV).